The primary structure comprises 246 residues: FAD synthetase (246 aa).

The protein belongs to the RibF family.

The catalysed reaction is FMN + ATP + H(+) = FAD + diphosphate. It functions in the pathway cofactor biosynthesis; FAD biosynthesis; FAD from FMN: step 1/1. Its function is as follows. Catalyzes the adenylation of flavin mononucleotide (FMN) to form flavin adenine dinucleotide (FAD) coenzyme. Can also catalyze, with lower efficiency, the adenylation of the toxic riboflavin analogs 8-demethyl-8-aminoriboflavin mononucleotide (AFMN) and roseoflavin mononucleotide (RoFMN) to 8-demethyl-8-aminoriboflavin adenine dinucleotide (AFAD) and roseoflavin adenine dinucleotide (RoFAD), respectively. This chain is FAD synthetase, found in Listeria monocytogenes serovar 1/2a (strain ATCC BAA-679 / EGD-e).